The sequence spans 374 residues: MADYWKSQPKKFCDYCKCWIADNRPSVEFHERGKNHKENVARKISEIKQKSLDKAKEEEKASKEFAAMEAAALKAYQEDLKRLGLQSDISEPTISPVTNTVQPTPTANQQKEKKKKKKKKEASKGRWVEGVTADGHCYYYDLVTGASQWEKPEGFQGNLKKTAAKAIWVEGLSEDGYTYYYNTETGESKWEKPDDFIPHGGDVLSSKDSEKLPDTLEDSKSSDSHSDSDDEQKKAGEASAETKKLIIKFKEKNKSTEKRIGPEIQKEKTTPKQNPSNTNEEKPKTPKKSTNPYGEWQEIKQEAESQEEVDLELPSTENECLSSSEAGAGEIKVVFKEKTVSSLGVAADGVAPVFKKRRIENGKSRNLRQRGEDE.

The segment at 11–42 (KFCDYCKCWIADNRPSVEFHERGKNHKENVAR) adopts a Matrin-type zinc-finger fold. The segment covering 91–109 (EPTISPVTNTVQPTPTANQ) has biased composition (polar residues). Disordered stretches follow at residues 91 to 126 (EPTI…SKGR) and 188 to 328 (SKWE…EAGA). Positions 112–121 (EKKKKKKKKE) are enriched in basic residues. 2 consecutive WW domains span residues 121–154 (EASK…KPEG) and 162–195 (TAAK…KPDD). Basic and acidic residues-rich tracts occupy residues 188 to 197 (SKWEKPDDFI) and 205 to 270 (SSKD…EKTT). A phosphoserine mark is found at S219, S226, and S228. Polar residues predominate over residues 315 to 325 (STENECLSSSE). The interaction with SNRNP200 stretch occupies residues 355–373 (KKRRIENGKSRNLRQRGED).

Component of the spliceosome B complex. Associated with U2 snRNPs. Binds splicing factors SNRPB, SNRPC and SF1. Interacts via the WW domains with the Pro-rich domains of KHDRBS1/SAM68. Interacts via the WW domains with the Pro-rich domains of WBP11. Interacts with SNRNP200.

Its subcellular location is the nucleus. It localises to the nucleus speckle. Its function is as follows. Involved in pre-mRNA splicing as a component of the spliceosome. May play a role in cross-intron bridging of U1 and U2 snRNPs in the mammalian A complex. This is WW domain-binding protein 4 (Wbp4) from Rattus norvegicus (Rat).